The primary structure comprises 303 residues: MWFKNLTLYRFNKPFTTDTETLENALADFTFSPCSSQDISKFGFSNALGKKGQALVHSAENRHLLCVTKEEKILPGQVIKEALDEKVAEIEELENRKVTKKEKDTIKDEITTTLLPRAFSRRSQTHALIMPELEMILVDSSSATKAEELLALLRKALGSLPVIPLSYATPIESTLTQWLQAGEAPAPFEMQDEAELKSDSDEGGIVRFKQQVLQEDEVLAHIATGKQVHKLALHFGQSIAFLMQSDASIKRLKFSEEFRAGNDEVGTEDPLARLDADFALMGSELVAFVNAVNQAFGPLEQSV.

The protein belongs to the RdgC family.

It localises to the cytoplasm. The protein localises to the nucleoid. May be involved in recombination. The chain is Recombination-associated protein RdgC from Shewanella frigidimarina (strain NCIMB 400).